The following is a 586-amino-acid chain: MKASSYLIPTAKEDPQDAVVASHKLMMRAGLIRKSAAGLYSYLPLGLRVLRKIEGIVRKEMDKAGGLEFQLPILTPSEIWKESGRWDKMGKEMFRLKDRHDNESCLGPTHEESFCVLVKPMVRSYKDLPINVYQIHTKFRDEIRPRFGVIRSREFTMKDAYSFHLDDESLDKTYQTMRKTYRRIFAGMGLTTIPVQADSGNMGGSASEEFMVVSPIGEETLTICPSCHYSGNIEKTPVIVNRNATKQVFDGKGKLHTPAKKSITEVAEFLNTKEENLLKAVAVVADGQYILVFLEGDRELNENKLKNHLGCNELRPMGPAEMEKLGLVPGFIGPGFPKSESLKIYIDALLDWNFSYIAGGNEIDHHIAGVQLTSIFKEEEVTKIDISQAKVGDPCPSCGTGLTAEKGIEVGHIFKLGQKYSKAFDITVLNDKGKATTTTMGCYGIGVNRCMATVIEQCNDEKGIFWPVSIAPFTVCLVSIAKNPDDIAKIETIYKSLVESGIEVLWDDRDLGPGFKFKDSELIGFPIRITLGKGFLEKNEITILDRKSMAEDTLVYTTNEELVTHLKLKISQLEETIEKEVSLAGT.

Belongs to the class-II aminoacyl-tRNA synthetase family. ProS type 1 subfamily. In terms of assembly, homodimer.

It is found in the cytoplasm. The enzyme catalyses tRNA(Pro) + L-proline + ATP = L-prolyl-tRNA(Pro) + AMP + diphosphate. Functionally, catalyzes the attachment of proline to tRNA(Pro) in a two-step reaction: proline is first activated by ATP to form Pro-AMP and then transferred to the acceptor end of tRNA(Pro). As ProRS can inadvertently accommodate and process non-cognate amino acids such as alanine and cysteine, to avoid such errors it has two additional distinct editing activities against alanine. One activity is designated as 'pretransfer' editing and involves the tRNA(Pro)-independent hydrolysis of activated Ala-AMP. The other activity is designated 'posttransfer' editing and involves deacylation of mischarged Ala-tRNA(Pro). The misacylated Cys-tRNA(Pro) is not edited by ProRS. In Leptospira biflexa serovar Patoc (strain Patoc 1 / Ames), this protein is Proline--tRNA ligase.